The following is a 275-amino-acid chain: Dermonecrotic toxin SpaSicTox-betaIIA2 (275 aa).

Residue H5 is part of the active site. Mg(2+)-binding residues include E25 and D27. H41 (nucleophile) is an active-site residue. 2 disulfide bridges follow: C45-C51 and C47-C190. D85 is a binding site for Mg(2+).

It belongs to the arthropod phospholipase D family. Class II subfamily. The cofactor is Mg(2+). In terms of tissue distribution, expressed by the venom gland.

Its subcellular location is the secreted. It carries out the reaction an N-(acyl)-sphingosylphosphocholine = an N-(acyl)-sphingosyl-1,3-cyclic phosphate + choline. The catalysed reaction is an N-(acyl)-sphingosylphosphoethanolamine = an N-(acyl)-sphingosyl-1,3-cyclic phosphate + ethanolamine. It catalyses the reaction a 1-acyl-sn-glycero-3-phosphocholine = a 1-acyl-sn-glycero-2,3-cyclic phosphate + choline. The enzyme catalyses a 1-acyl-sn-glycero-3-phosphoethanolamine = a 1-acyl-sn-glycero-2,3-cyclic phosphate + ethanolamine. Its function is as follows. Dermonecrotic toxins cleave the phosphodiester linkage between the phosphate and headgroup of certain phospholipids (sphingolipid and lysolipid substrates), forming an alcohol (often choline) and a cyclic phosphate. This toxin acts on sphingomyelin (SM). It may also act on ceramide phosphoethanolamine (CPE), lysophosphatidylcholine (LPC) and lysophosphatidylethanolamine (LPE), but not on lysophosphatidylserine (LPS), and lysophosphatidylglycerol (LPG). It acts by transphosphatidylation, releasing exclusively cyclic phosphate products as second products. Induces dermonecrosis, hemolysis, increased vascular permeability, edema, inflammatory response, and platelet aggregation. This is Dermonecrotic toxin SpaSicTox-betaIIA2 from Sicarius patagonicus (Six-eyed sand spider).